The sequence spans 206 residues: Large ribosomal subunit protein uL4 (206 aa).

Polar residues predominate over residues 42–54 (RRQQGTHQSQGRS). The disordered stretch occupies residues 42–94 (RRQQGTHQSQGRSDVSRTGAKMFKQKGTGRARHSSARAPQFRGGGKAHGPVFR). Over residues 64-76 (FKQKGTGRARHSS) the composition is skewed to basic residues.

This sequence belongs to the universal ribosomal protein uL4 family. Part of the 50S ribosomal subunit.

Functionally, one of the primary rRNA binding proteins, this protein initially binds near the 5'-end of the 23S rRNA. It is important during the early stages of 50S assembly. It makes multiple contacts with different domains of the 23S rRNA in the assembled 50S subunit and ribosome. Its function is as follows. Forms part of the polypeptide exit tunnel. The protein is Large ribosomal subunit protein uL4 of Bartonella tribocorum (strain CIP 105476 / IBS 506).